The sequence spans 478 residues: Maintenance of telomere capping protein 1 (478 aa).

The tract at residues 1 to 153 (MSENKNSEAE…LHDPIASISN (153 aa)) is disordered. Composition is skewed to basic and acidic residues over residues 77-87 (TDKKGVEKKAP) and 95-124 (AQDE…QQQE). Residues 125–141 (KEEEEEEEEEEEEEEEE) are compositionally biased toward acidic residues. Serine 273 carries the post-translational modification Phosphoserine. 2 stretches are compositionally biased toward basic and acidic residues: residues 321-336 (QKQQ…DDRS) and 421-435 (SEER…KQKE). Disordered regions lie at residues 321–341 (QKQQ…ISSN) and 416–448 (TGST…IIDP). Serine 436 is subject to Phosphoserine. A compositionally biased stretch (acidic residues) spans 436–447 (SEDEDEDDEIID).

The protein belongs to the MTC1 family. In terms of assembly, interacts with ribosomes.

It is found in the cytoplasm. Its subcellular location is the cytoplasmic vesicle. The protein resides in the COPI-coated vesicle. Involved in telomere capping. The polypeptide is Maintenance of telomere capping protein 1 (MTC1) (Saccharomyces cerevisiae (strain ATCC 204508 / S288c) (Baker's yeast)).